The primary structure comprises 510 residues: Beta-glucosidase 12 (510 aa).

Residues 1 to 24 (MAAAGAMPGGLLLTFLLLAVVASG) form the signal peptide. Glutamine 53 contacts a beta-D-glucoside. N-linked (GlcNAc...) asparagine glycosylation occurs at asparagine 122. A beta-D-glucoside contacts are provided by residues histidine 157 and 202–203 (NE). The active-site Proton donor is the glutamate 203. Disulfide bonds link cysteine 208–cysteine 243 and cysteine 222–cysteine 230. Asparagine 229 carries N-linked (GlcNAc...) asparagine glycosylation. An a beta-D-glucoside-binding site is contributed by tyrosine 346. N-linked (GlcNAc...) asparagine glycosylation is found at asparagine 361 and asparagine 371. Glutamate 417 is an a beta-D-glucoside binding site. Residue glutamate 417 is the Nucleophile of the active site. Asparagine 425 is a glycosylation site (N-linked (GlcNAc...) asparagine). Residues tryptophan 466, 473–474 (EW), and phenylalanine 482 each bind a beta-D-glucoside.

The protein belongs to the glycosyl hydrolase 1 family.

The protein resides in the secreted. It carries out the reaction Hydrolysis of terminal, non-reducing beta-D-glucosyl residues with release of beta-D-glucose.. Hydrolyzes p-nitrophenyl beta-D-glucoside, p-nitrophenyl beta-D-galactoside, p-nitrophenyl beta-D-xyloside, p-nitrophenyl beta-D-fucoside, p-nitrophenyl beta-L-arabinoside, cello-oligosaccharides and laminaribiose. The protein is Beta-glucosidase 12 of Oryza sativa subsp. japonica (Rice).